Here is a 202-residue protein sequence, read N- to C-terminus: Holliday junction branch migration complex subunit RuvA (202 aa).

The segment at 1-64 is domain I; that stretch reads MFAYIRGRLE…EDVISLYGFL (64 aa). The interval 65–143 is domain II; the sequence is TQEELNVFEL…KEQLTEYAQS (79 aa). The segment at 144–152 is flexible linker; that stretch reads EEGGKVLDT. Residues 152-202 form a domain III region; sequence TDSSKMAEAVSALMVLGYSPAEANKAVSAVYREDMDIETIIKNALKGLARP.

Belongs to the RuvA family. As to quaternary structure, homotetramer. Forms an RuvA(8)-RuvB(12)-Holliday junction (HJ) complex. HJ DNA is sandwiched between 2 RuvA tetramers; dsDNA enters through RuvA and exits via RuvB. An RuvB hexamer assembles on each DNA strand where it exits the tetramer. Each RuvB hexamer is contacted by two RuvA subunits (via domain III) on 2 adjacent RuvB subunits; this complex drives branch migration. In the full resolvosome a probable DNA-RuvA(4)-RuvB(12)-RuvC(2) complex forms which resolves the HJ.

Its subcellular location is the cytoplasm. In terms of biological role, the RuvA-RuvB-RuvC complex processes Holliday junction (HJ) DNA during genetic recombination and DNA repair, while the RuvA-RuvB complex plays an important role in the rescue of blocked DNA replication forks via replication fork reversal (RFR). RuvA specifically binds to HJ cruciform DNA, conferring on it an open structure. The RuvB hexamer acts as an ATP-dependent pump, pulling dsDNA into and through the RuvAB complex. HJ branch migration allows RuvC to scan DNA until it finds its consensus sequence, where it cleaves and resolves the cruciform DNA. In Acetivibrio thermocellus (strain ATCC 27405 / DSM 1237 / JCM 9322 / NBRC 103400 / NCIMB 10682 / NRRL B-4536 / VPI 7372) (Clostridium thermocellum), this protein is Holliday junction branch migration complex subunit RuvA.